We begin with the raw amino-acid sequence, 496 residues long: Genome polyprotein (496 aa).

Residues 1 to 447 (SRCTHLENRD…HTVLGGAFNS (447 aa)) are Extracellular-facing. Cystine bridges form between C3–C30, C60–C116, C60–C121, C74–C105, C92–C116, and C92–C121. The interval 98–111 (DRGWGNHCGLFGKG) is fusion peptide. The N-linked (GlcNAc...) asparagine; by host glycan is linked to N154. Disulfide bonds link C186–C290 and C307–C338. The chain crosses the membrane as a helical span at residues 448 to 468 (IFGGVGFLPKLLMGVALAWLG). Topologically, residues 469–479 (LNTRNPTMSIS) are cytoplasmic. The helical transmembrane segment at 480–496 (FLLTGGLVLAMTLGVGA) threads the bilayer.

Homodimer; in the endoplasmic reticulum and Golgi. N-glycosylated.

It localises to the virion membrane. The protein resides in the host endoplasmic reticulum membrane. In terms of biological role, binds to host cell surface receptor and mediates fusion between viral and cellular membranes. Envelope protein is synthesized in the endoplasmic reticulum in the form of heterodimer with protein prM. They play a role in virion budding in the ER, and the newly formed immature particle is covered with 60 spikes composed of heterodimer between precursor prM and envelope protein E. The virion is transported to the Golgi apparatus where the low pH causes dissociation of PrM-E heterodimers and formation of E homodimers. prM-E cleavage is ineficient, and many virions are only partially matured. These uncleaved prM would play a role in immune evasion. The chain is Genome polyprotein from Louping ill virus (strain SB 526) (Li).